Reading from the N-terminus, the 293-residue chain is 4-hydroxy-tetrahydrodipicolinate synthase (293 aa).

Thr-45 lines the pyruvate pocket. Tyr-133 (proton donor/acceptor) is an active-site residue. Lys-161 (schiff-base intermediate with substrate) is an active-site residue. Ile-203 contacts pyruvate.

Belongs to the DapA family. Homotetramer; dimer of dimers.

It is found in the cytoplasm. It carries out the reaction L-aspartate 4-semialdehyde + pyruvate = (2S,4S)-4-hydroxy-2,3,4,5-tetrahydrodipicolinate + H2O + H(+). The protein operates within amino-acid biosynthesis; L-lysine biosynthesis via DAP pathway; (S)-tetrahydrodipicolinate from L-aspartate: step 3/4. Catalyzes the condensation of (S)-aspartate-beta-semialdehyde [(S)-ASA] and pyruvate to 4-hydroxy-tetrahydrodipicolinate (HTPA). In Aliivibrio fischeri (strain ATCC 700601 / ES114) (Vibrio fischeri), this protein is 4-hydroxy-tetrahydrodipicolinate synthase.